The primary structure comprises 426 residues: UDP-N-acetylglucosamine 1-carboxyvinyltransferase (426 aa).

22–23 contributes to the phosphoenolpyruvate binding site; it reads KN. Arginine 93 is a UDP-N-acetyl-alpha-D-glucosamine binding site. Cysteine 117 (proton donor) is an active-site residue. Cysteine 117 carries the 2-(S-cysteinyl)pyruvic acid O-phosphothioketal modification. UDP-N-acetyl-alpha-D-glucosamine is bound by residues 162–165, aspartate 307, and isoleucine 329; that span reads KVSV.

Belongs to the EPSP synthase family. MurA subfamily.

It is found in the cytoplasm. It carries out the reaction phosphoenolpyruvate + UDP-N-acetyl-alpha-D-glucosamine = UDP-N-acetyl-3-O-(1-carboxyvinyl)-alpha-D-glucosamine + phosphate. Its pathway is cell wall biogenesis; peptidoglycan biosynthesis. Its function is as follows. Cell wall formation. Adds enolpyruvyl to UDP-N-acetylglucosamine. The protein is UDP-N-acetylglucosamine 1-carboxyvinyltransferase of Haemophilus ducreyi (strain 35000HP / ATCC 700724).